The primary structure comprises 356 residues: NF-kappa-B inhibitor beta (356 aa).

Ser19 and Ser23 each carry phosphoserine; by RPS6KA1. ANK repeat units lie at residues 57-86 (DGDTALHLAVIHQHEPFLDFLLGFSAGTEY), 93-122 (LGQTALHLAAILGETSTVEKLYAAGAGLCV), and 126-155 (RGHTALHLACRVGAHACARALLQPRPRRPR). A disordered region spans residues 149–193 (PRPRRPREAPDTYLAQGPDRTPDTNHTPVALYPDSDLEKEEEESE). Ser183 carries the phosphoserine modification. The segment covering 183 to 193 (SDLEKEEEESE) has biased composition (acidic residues). ANK repeat units lie at residues 206–235 (EGHTPLHVAVIHKDVEMVRLLRDAGADLDK), 240–269 (CGRSPLHLAVEAQAADVLELLLRAGANPAA), and 273–302 (GGRTPLGSAMLRPNPILARLLRAHGAPEPE). The segment at 298–356 (APEPEGEDEKSGPCSSSSDSDSGDEGDEYDDIVVHSSRSQTRLPPTPASKPLPDDPRPV) is disordered. Phosphoserine; by CK2 is present on residues Ser313 and Ser315. A compositionally biased stretch (acidic residues) spans 318–328 (DSGDEGDEYDD).

This sequence belongs to the NF-kappa-B inhibitor family. In terms of assembly, interacts with THRB (via ligand-binding domain). Interacts with RELA and REL. Interacts with COMMD1. Interacts with inhibitor kappa B-interacting Ras-like NKIRAS1 and NKIRAS2. Phosphorylated by RPS6KA1; followed by degradation. Interaction with NKIRAS1 and NKIRAS2 probably prevents phosphorylation. Expressed in all tissues examined.

It is found in the cytoplasm. Its subcellular location is the nucleus. Functionally, inhibits NF-kappa-B by complexing with and trapping it in the cytoplasm. However, the unphosphorylated form resynthesized after cell stimulation is able to bind NF-kappa-B allowing its transport to the nucleus and protecting it to further NFKBIA-dependent inactivation. Association with inhibitor kappa B-interacting NKIRAS1 and NKIRAS2 prevent its phosphorylation rendering it more resistant to degradation, explaining its slower degradation. This Homo sapiens (Human) protein is NF-kappa-B inhibitor beta (NFKBIB).